The sequence spans 160 residues: Lipoprotein signal peptidase (160 aa).

The next 3 membrane-spanning stretches (helical) occupy residues 5–25, 60–80, and 84–104; these read LVFF…KFII, IEWL…AFFI, and LPFL…AGTV. Catalysis depends on residues D118 and D132. Residues 128-148 form a helical membrane-spanning segment; sequence FNIADSCLTVGVIGLLLLYIV.

This sequence belongs to the peptidase A8 family.

It is found in the cell membrane. It carries out the reaction Release of signal peptides from bacterial membrane prolipoproteins. Hydrolyzes -Xaa-Yaa-Zaa-|-(S,diacylglyceryl)Cys-, in which Xaa is hydrophobic (preferably Leu), and Yaa (Ala or Ser) and Zaa (Gly or Ala) have small, neutral side chains.. It functions in the pathway protein modification; lipoprotein biosynthesis (signal peptide cleavage). This protein specifically catalyzes the removal of signal peptides from prolipoproteins. The protein is Lipoprotein signal peptidase of Dehalococcoides mccartyi (strain ATCC BAA-2100 / JCM 16839 / KCTC 5957 / BAV1).